The sequence spans 648 residues: RAF proto-oncogene serine/threonine-protein kinase (648 aa).

Ser-29 carries the phosphoserine; by MAPK1 modification. Phosphoserine is present on Ser-43. The 76-residue stretch at 56–131 (NTIRVFLPNK…IGEELQVDFL (76 aa)) folds into the RBD domain. Residues 138–184 (THNFARKTFLKLAFCDICQKFLLNGFRCQTCGYKFHEHCSTKVPTMC) form a Phorbol-ester/DAG-type zinc finger. Zn(2+)-binding residues include His-139, Cys-152, Cys-155, Cys-165, Cys-168, His-173, Cys-176, and Cys-184. A disordered region spans residues 217 to 335 (MRESVSRMPA…EKNKIRPRGQ (119 aa)). Ser-233 bears the Phosphoserine; by PKA mark. The segment covering 239-271 (TFNTSSPSSEGSLSQRQRSTSTPNVHMVSTTLP) has biased composition (polar residues). Residues Ser-252 and Ser-259 each carry the phosphoserine modification. Phosphothreonine; by autocatalysis is present on Thr-268. Thr-269 is modified (phosphothreonine; by PKA). Residues 275 to 285 (RMIEDAIRSHS) are compositionally biased toward basic and acidic residues. Over residues 286-301 (ESASPSALSSSPNNLS) the composition is skewed to low complexity. A phosphoserine; by MAPK1 mark is found at Ser-289, Ser-296, and Ser-301. Residues 331–349 (RPRGQRDSSYYWEIEASEV) form an interaction with PEBP1/RKIP region. The residue at position 338 (Ser-338) is a Phosphoserine; by PAK1, PAK2, PAK3 and PAK5. Residue Ser-339 is modified to Phosphoserine; by PAK1, PAK2 and PAK3. 2 positions are modified to phosphotyrosine; by SRC: Tyr-340 and Tyr-341. One can recognise a Protein kinase domain in the interval 349-609 (VMLSTRIGSG…PQILSSIELL (261 aa)). ATP is bound by residues 355–363 (IGSGSFGTV) and Lys-375. The active-site Proton acceptor is the Asp-468. Ser-471 bears the Phosphoserine mark. Thr-491 carries the post-translational modification Phosphothreonine. Residue Ser-494 is modified to Phosphoserine. Phosphoserine; by PKC occurs at positions 497 and 499. At Arg-563 the chain carries Symmetric dimethylarginine; by PRMT5. Ser-621 carries the post-translational modification Phosphoserine. Phosphoserine; by MAPK1 is present on Ser-642.

The protein belongs to the protein kinase superfamily. TKL Ser/Thr protein kinase family. RAF subfamily. In terms of assembly, monomer. Homodimer. Heterodimerizes with BRAF and this heterodimer possesses a highly increased kinase activity compared to the respective homodimers or monomers. Heterodimerization is mitogen-regulated and enhanced by 14-3-3 proteins. MAPK1/ERK2 activation can induce a negative feedback that promotes the dissociation of the heterodimer. Forms a multiprotein complex with Ras (M-Ras/MRAS), SHOC2 and protein phosphatase 1 (PPP1CA, PPP1CB and PPP1CC). Interacts with LZTR1. Interacts with Ras proteins; the interaction is antagonized by RIN1. Weakly interacts with RIT1. Interacts with STK3/MST2; the interaction inhibits its pro-apoptotic activity. Interacts (when phosphorylated at Ser-259) with YWHAZ (unphosphorylated at 'Thr-232'). Interacts with MAP3K5/ASF1 (via N-terminus) and this interaction inhibits the proapoptotic function of MAP3K5/ASK1. Interacts with PAK1 (via kinase domain). The phosphorylated form interacts with PIN1. The Ser-338 and Ser-339 phosphorylated form (by PAK1) interacts with BCL2. Interacts with PEBP1/RKIP and this interaction is enhanced if RAF1 is phosphorylated on residues Ser-338, Ser-339, Tyr-340 and Tyr-341. Interacts with ADCY2, ADCY5, ADCY6, DGKH, RCAN1/DSCR1, PPP1R12A, PKB/AKT1, PPP2CA, PPP2R1B, SPRY2, SPRY4, CNKSR1/CNK1, KSR2 and PHB/prohibitin. Interacts with ROCK2. Interacts (via N-terminus) with RGS14 (via RBD domains); the interaction mediates the formation of a ternary complex with BRAF, a ternary complex inhibited by GNAI1. Probably forms a complex composed of chaperones HSP90 and HSP70, co-chaperones CDC37, PPP5C, TSC1 and client protein TSC2, CDK4, AKT, RAF1 and NR3C1; this complex does not contain co-chaperones STIP1/HOP and PTGES3/p23. Interacts with MAP2K1/MEK1 and MAP2K2/MEK2. In its active form, interacts with PRMT5. Interacts with FAM83B; displaces 14-3-3 proteins from RAF1 and activates RAF1. Interacts with PDE8A; the interaction promotes RAF1 activity. Interacts with MFHAS1. Interacts with GLS. Interacts with YWHAZ. Interacts with NEK10 and MAP2K1; the interaction is direct with NEK10 and required for ERK1/2-signaling pathway activation in response to UV irradiation. Requires Zn(2+) as cofactor. Post-translationally, phosphorylation at Thr-269, Ser-338, Tyr-341, Thr-491 and Ser-494 results in its activation. Phosphorylation at Ser-29, Ser-43, Ser-289, Ser-296, Ser-301 and Ser-642 by MAPK1/ERK2 results in its inactivation. Phosphorylation at Ser-259 induces the interaction with YWHAZ and inactivates kinase activity. Dephosphorylation of Ser-259 by the SHOC2-MRAS-PP1c (SMP) complex consisting of SHOC2, GTP-bound M-Ras/MRAS and the catalytic subunit of protein phosphatase 1 (PPP1CA, PPP1CB or PPP1CC); this relieves inactivation and stimulates kinase activity. Phosphorylation at Ser-338 by PAK1 and PAK5 and Ser-339 by PAK1 is required for its mitochondrial localization. Phosphorylation at Ser-621 in response to growth factor treatment stabilizes the protein, possibly by preventing proteasomal degradation. Phosphorylation at Ser-289, Ser-296, Ser-301, Ser-338 and Ser-621 are somehow linked to the methylation potential of cells. Treatment of cells with HGF in the presence of the methylation inhibitor 5'-methylthioadenosine (MTA) results in increased phosphorylation at Ser-338 and Ser-621 and decreased phosphorylation at Ser-296, Ser-301 and Ser-338. Dephosphorylation at Ser-338 by PPP5C results in a decreased of activity. Methylated in response to EGF treatment. This modification leads to destabilization of the protein, possibly through proteasomal degradation.

The protein resides in the cytoplasm. Its subcellular location is the cell membrane. It localises to the mitochondrion. The protein localises to the nucleus. The catalysed reaction is L-seryl-[protein] + ATP = O-phospho-L-seryl-[protein] + ADP + H(+). The enzyme catalyses L-threonyl-[protein] + ATP = O-phospho-L-threonyl-[protein] + ADP + H(+). With respect to regulation, regulation is a highly complex process involving membrane recruitment, protein-protein interactions, dimerization, and phosphorylation/dephosphorylation events. Ras-GTP recruits RAF1 to the membrane, thereby promoting its activation. The inactive conformation of RAF1 is maintained by autoinhibitory interactions occurring between the N-terminal regulatory and the C-terminal catalytic domains and by the binding of a 14-3-3 protein that contacts two phosphorylation sites, Ser-259 and Ser-621. Upon mitogenic stimulation, Ras and PPP2R1A cooperate to release autoinhibition and the subsequent phosphorylation of activating sites: Ser-338, Tyr-341, Thr-491, and Ser-494, yields a fully active kinase. Through a negative feedback mechanism involving MAPK1/ERK2, RAF1 is phosphorylated on Ser-29, Ser-43, Ser-289, Ser-296, Ser-301 and Ser-642 by MAPK1/ERK2, which yields an inactive, desensitized kinase. The signaling-competent conformation of RAF1 is finally re-established by the coordinated action of PIN1, a prolyl isomerase that converts pSer and pThr residues from the cis to the trans conformation, which is preferentially recognized and dephosphorylated by PPP2R1A. Activated by homodimerization and heterodimerization (with BRAF). Also regulated through association with other proteins such as KSR2, CNKSR1/CNK1, PEBP1/RKIP, PHB/prohibitin and SPRY4. PEBP1/RKIP acts by dissociating RAF1 from its substrates MAP2K1/MEK1 and MAP2K2/MEK2. PHB/prohibitin facilitates the displacement of 14-3-3 from RAF1 by activated Ras, thereby promoting cell membrane localization and phosphorylation of RAF1 at the activating Ser-338. SPRY4 inhibits Ras-independent, but not Ras-dependent, activation of RAF1. CNKSR1/CNK1 regulates Src-mediated RAF1 activation. Its function is as follows. Serine/threonine-protein kinase that acts as a regulatory link between the membrane-associated Ras GTPases and the MAPK/ERK cascade, and this critical regulatory link functions as a switch determining cell fate decisions including proliferation, differentiation, apoptosis, survival and oncogenic transformation. RAF1 activation initiates a mitogen-activated protein kinase (MAPK) cascade that comprises a sequential phosphorylation of the dual-specific MAPK kinases (MAP2K1/MEK1 and MAP2K2/MEK2) and the extracellular signal-regulated kinases (MAPK3/ERK1 and MAPK1/ERK2). The phosphorylated form of RAF1 (on residues Ser-338 and Ser-339, by PAK1) phosphorylates BAD/Bcl2-antagonist of cell death at 'Ser-75'. Phosphorylates adenylyl cyclases: ADCY2, ADCY5 and ADCY6, resulting in their activation. Phosphorylates PPP1R12A resulting in inhibition of the phosphatase activity. Can promote NF-kB activation and inhibit signal transducers involved in motility (ROCK2), apoptosis (MAP3K5/ASK1 and STK3/MST2), proliferation and angiogenesis (RB1). Can protect cells from apoptosis also by translocating to the mitochondria where it binds BCL2 and displaces BAD/Bcl2-antagonist of cell death. Regulates Rho signaling and migration, and is required for normal wound healing. Plays a role in the oncogenic transformation of epithelial cells via repression of the TJ protein, occludin (OCLN) by inducing the up-regulation of a transcriptional repressor SNAI2/SLUG, which induces down-regulation of OCLN. Restricts caspase activation in response to selected stimuli, notably Fas stimulation, pathogen-mediated macrophage apoptosis, and erythroid differentiation. Phosphorylates TNNT2/cardiac muscle troponin T. The protein is RAF proto-oncogene serine/threonine-protein kinase (Raf1) of Rattus norvegicus (Rat).